The chain runs to 284 residues: Putative ABC transporter ATP-binding protein sll0385 (284 aa).

An ABC transporter domain is found at 51–278 (IRVRELSFAY…QTLMESHGLE (228 aa)). Residue 84–91 (GHNGCGKT) participates in ATP binding.

It belongs to the ABC transporter superfamily.

The protein localises to the cell inner membrane. Functionally, probably part of an ABC transporter complex. Responsible for energy coupling to the transport system. The sequence is that of Putative ABC transporter ATP-binding protein sll0385 from Synechocystis sp. (strain ATCC 27184 / PCC 6803 / Kazusa).